A 470-amino-acid polypeptide reads, in one-letter code: Nitric oxide synthase, inducible (470 aa).

L-arginine is bound by residues Trp-2, Tyr-3, and Glu-7. (6R)-L-erythro-5,6,7,8-tetrahydrobiopterin is bound by residues Arg-11, Trp-93, and Phe-106. Residue Tyr-121 coordinates heme b. The segment at 145-165 (FKAVARAALFSSTLMSRVLAN) is calmodulin-binding. One can recognise a Flavodoxin-like domain in the interval 169–307 (CTVLYATETG…AFSAWALTAL (139 aa)). The FMN site is built by Thr-175, Glu-176, Thr-177, Lys-179, Ser-180, Ser-221, Thr-222, Ser-258, Cys-265, Glu-291, and Gln-295. Residue Arg-380 participates in NADP(+) binding. Residue His-403 participates in FAD binding. Thr-440 contributes to the NADP(+) binding site.

It belongs to the NOS family. In terms of assembly, homodimer. Heme b is required as a cofactor. The cofactor is FAD. FMN serves as cofactor. It depends on (6R)-L-erythro-5,6,7,8-tetrahydrobiopterin as a cofactor.

It is found in the cytoplasm. The protein localises to the cytosol. It carries out the reaction 2 L-arginine + 3 NADPH + 4 O2 + H(+) = 2 L-citrulline + 2 nitric oxide + 3 NADP(+) + 4 H2O. Its activity is regulated as follows. Not stimulated by calcium/calmodulin. Functionally, produces nitric oxide (NO) which is a messenger molecule with diverse functions throughout the body. In macrophages, NO mediates tumoricidal and bactericidal actions. Also has nitrosylase activity and mediates cysteine S-nitrosylation of cytoplasmic target proteins such COX2. This Oncorhynchus mykiss (Rainbow trout) protein is Nitric oxide synthase, inducible (nos2).